We begin with the raw amino-acid sequence, 388 residues long: 4-hydroxy-3-methylbut-2-en-1-yl diphosphate synthase (flavodoxin) (388 aa).

The [4Fe-4S] cluster site is built by C281, C284, C316, and E323.

It belongs to the IspG family. Requires [4Fe-4S] cluster as cofactor.

It carries out the reaction (2E)-4-hydroxy-3-methylbut-2-enyl diphosphate + oxidized [flavodoxin] + H2O + 2 H(+) = 2-C-methyl-D-erythritol 2,4-cyclic diphosphate + reduced [flavodoxin]. The protein operates within isoprenoid biosynthesis; isopentenyl diphosphate biosynthesis via DXP pathway; isopentenyl diphosphate from 1-deoxy-D-xylulose 5-phosphate: step 5/6. In terms of biological role, converts 2C-methyl-D-erythritol 2,4-cyclodiphosphate (ME-2,4cPP) into 1-hydroxy-2-methyl-2-(E)-butenyl 4-diphosphate. The chain is 4-hydroxy-3-methylbut-2-en-1-yl diphosphate synthase (flavodoxin) from Arthrobacter sp. (strain FB24).